Here is a 665-residue protein sequence, read N- to C-terminus: Mitochondrial Rho GTPase 1 (665 aa).

Residues 1–634 (MTNDVIRIVV…NQDPEEETNT (634 aa)) lie on the Cytoplasmic side of the membrane. A Miro 1 domain is found at 3-177 (NDVIRIVVCG…FYLCQKAVMH (175 aa)). GTP contacts are provided by residues 12-19 (GDEGVGKS), 61-67 (DTQFSNS), and 119-122 (NVFD). EF-hand domains lie at 193–228 (NAVA…CFGR) and 313–348 (EGYR…TPGI). Ca(2+) contacts are provided by D206, D208, D210, Y212, E217, D326, D328, D330, and E337. The 167-residue stretch at 452 to 618 (RSVFNCFVLG…FIQLAEAAQQ (167 aa)) folds into the Miro 2 domain. Residues 461-468 (GSHMSGKT), 498-502 (EMTGG), and 567-570 (LKAD) contribute to the GTP site. A helical; Anchor for type IV membrane protein transmembrane segment spans residues 635–655 (IMPFALAGGATVLLAAAVAWI). The Mitochondrial intermembrane segment spans residues 656–665 (FKNVRVAGRE).

It belongs to the mitochondrial Rho GTPase family.

The protein resides in the mitochondrion outer membrane. In terms of biological role, mitochondrial GTPase involved in mitochondrial trafficking. Probably involved in control of anterograde transport of mitochondria and their subcellular distribution. This chain is Mitochondrial Rho GTPase 1 (GEM1), found in Yarrowia lipolytica (strain CLIB 122 / E 150) (Yeast).